Consider the following 264-residue polypeptide: Elongator complex protein 6 (264 aa).

Belongs to the ELP6 family. Component of the elongator complex.

The protein localises to the cytoplasm. Its subcellular location is the nucleus. Its pathway is tRNA modification; 5-methoxycarbonylmethyl-2-thiouridine-tRNA biosynthesis. In terms of biological role, component of the elongator complex which is required for multiple tRNA modifications, including mcm5U (5-methoxycarbonylmethyl uridine), mcm5s2U (5-methoxycarbonylmethyl-2-thiouridine), and ncm5U (5-carbamoylmethyl uridine). The elongator complex catalyzes formation of carboxymethyluridine in the wobble base at position 34 in tRNAs. The polypeptide is Elongator complex protein 6 (elp6) (Danio rerio (Zebrafish)).